A 148-amino-acid chain; its full sequence is Stathmin (148 aa).

The region spanning 4–145 (SDIQVKELEK…NKEGKDPGEA (142 aa)) is the SLD domain. Ser16 carries the post-translational modification Phosphoserine; by PKA. At Ser38 the chain carries Phosphoserine; by CDK1. The stretch at 41-140 (KKKDLSLEEI…EEVRKNKEGK (100 aa)) forms a coiled coil. A Phosphoserine; by PKA modification is found at Ser63. The interval 122–148 (RLREKDKHIEEVRKNKEGKDPGEAETN) is disordered.

The protein belongs to the stathmin family. In terms of assembly, binds to two alpha/beta-tubulin heterodimers. Post-translationally, many different phosphorylated forms are observed depending on specific combinations among the sites which can be phosphorylated. MAPK is responsible for the phosphorylation of stathmin in response to NGF.

The protein resides in the cytoplasm. It is found in the cytoskeleton. Functionally, involved in the regulation of the microtubule (MT) filament system by destabilizing microtubules. It prevents assembly and promotes disassembly of microtubules. This is Stathmin (STMN1) from Gallus gallus (Chicken).